A 688-amino-acid chain; its full sequence is NADH-ubiquinone oxidoreductase 75 kDa subunit (688 aa).

The region spanning 1–85 (MIIRFKINEI…DESIETEIDE (85 aa)) is the 2Fe-2S ferredoxin-type domain. [2Fe-2S] cluster is bound by residues C38, C49, C52, and C66. The 40-residue stretch at 85 to 124 (EILKAREGVMEFLLINHPLDCPICDQGGECDLQEQTLAYG) folds into the 4Fe-4S His(Cys)3-ligated-type domain. [4Fe-4S] cluster contacts are provided by H101, C105, C108, C114, C153, C156, C159, and C204. The region spanning 223–279 (LKNIKGIDIFDTLLTPINYQVKGGEIFRILPRINDRINEEWITDKVRFHYESYKIIE) is the 4Fe-4S Mo/W bis-MGD-type domain.

It belongs to the complex I 75 kDa subunit family. Complex I is composed of about 45 different subunits. [2Fe-2S] cluster serves as cofactor. The cofactor is [4Fe-4S] cluster.

It is found in the mitochondrion inner membrane. It catalyses the reaction a ubiquinone + NADH + 5 H(+)(in) = a ubiquinol + NAD(+) + 4 H(+)(out). Functionally, core subunit of the mitochondrial membrane respiratory chain NADH dehydrogenase (Complex I) that is believed to belong to the minimal assembly required for catalysis. Complex I functions in the transfer of electrons from NADH to the respiratory chain. The immediate electron acceptor for the enzyme is believed to be ubiquinone. This is the largest subunit of complex I and it is a component of the iron-sulfur (IP) fragment of the enzyme. It may form part of the active site crevice where NADH is oxidized. This chain is NADH-ubiquinone oxidoreductase 75 kDa subunit (nad11), found in Dictyostelium discoideum (Social amoeba).